Reading from the N-terminus, the 334-residue chain is Fructose-1,6-bisphosphatase class 1 (334 aa).

Residues E91, D113, L115, and D116 each contribute to the Mg(2+) site. Substrate-binding positions include 116-119, N208, and K274; that span reads DGSS. Position 280 (E280) interacts with Mg(2+).

This sequence belongs to the FBPase class 1 family. In terms of assembly, homotetramer. Mg(2+) is required as a cofactor.

It is found in the cytoplasm. The enzyme catalyses beta-D-fructose 1,6-bisphosphate + H2O = beta-D-fructose 6-phosphate + phosphate. It functions in the pathway carbohydrate biosynthesis; gluconeogenesis. The protein is Fructose-1,6-bisphosphatase class 1 of Herminiimonas arsenicoxydans.